A 178-amino-acid polypeptide reads, in one-letter code: NADH-quinone oxidoreductase subunit I (178 aa).

4Fe-4S ferredoxin-type domains lie at 45–74 (RHPDTGLEKCIGCSLCAAACPAYAIYVEAA) and 90–119 (KVYEINMLRCIFCGLCEEACPTGAVVLGNE). [4Fe-4S] cluster contacts are provided by Cys-54, Cys-57, Cys-60, Cys-64, Cys-99, Cys-102, Cys-105, and Cys-109.

The protein belongs to the complex I 23 kDa subunit family. In terms of assembly, NDH-1 is composed of 15 different subunits. Subunits NuoA, H, J, K, L, M, N constitute the membrane sector of the complex. [4Fe-4S] cluster is required as a cofactor.

Its subcellular location is the cell membrane. It catalyses the reaction a quinone + NADH + 5 H(+)(in) = a quinol + NAD(+) + 4 H(+)(out). Functionally, NDH-1 shuttles electrons from NADH, via FMN and iron-sulfur (Fe-S) centers, to quinones in the respiratory chain. The immediate electron acceptor for the enzyme in this species is believed to be ubiquinone. Couples the redox reaction to proton translocation (for every two electrons transferred, four hydrogen ions are translocated across the cytoplasmic membrane), and thus conserves the redox energy in a proton gradient. The chain is NADH-quinone oxidoreductase subunit I from Deinococcus radiodurans (strain ATCC 13939 / DSM 20539 / JCM 16871 / CCUG 27074 / LMG 4051 / NBRC 15346 / NCIMB 9279 / VKM B-1422 / R1).